We begin with the raw amino-acid sequence, 180 residues long: ATP synthase subunit delta (180 aa).

This sequence belongs to the ATPase delta chain family. F-type ATPases have 2 components, F(1) - the catalytic core - and F(0) - the membrane proton channel. F(1) has five subunits: alpha(3), beta(3), gamma(1), delta(1), epsilon(1). F(0) has three main subunits: a(1), b(2) and c(10-14). The alpha and beta chains form an alternating ring which encloses part of the gamma chain. F(1) is attached to F(0) by a central stalk formed by the gamma and epsilon chains, while a peripheral stalk is formed by the delta and b chains.

The protein localises to the cell inner membrane. Functionally, f(1)F(0) ATP synthase produces ATP from ADP in the presence of a proton or sodium gradient. F-type ATPases consist of two structural domains, F(1) containing the extramembraneous catalytic core and F(0) containing the membrane proton channel, linked together by a central stalk and a peripheral stalk. During catalysis, ATP synthesis in the catalytic domain of F(1) is coupled via a rotary mechanism of the central stalk subunits to proton translocation. In terms of biological role, this protein is part of the stalk that links CF(0) to CF(1). It either transmits conformational changes from CF(0) to CF(1) or is implicated in proton conduction. The polypeptide is ATP synthase subunit delta (Pelobacter propionicus (strain DSM 2379 / NBRC 103807 / OttBd1)).